The following is a 183-amino-acid chain: Dual-action ribosomal maturation protein DarP (183 aa).

It belongs to the DarP family.

Its subcellular location is the cytoplasm. In terms of biological role, member of a network of 50S ribosomal subunit biogenesis factors which assembles along the 30S-50S interface, preventing incorrect 23S rRNA structures from forming. Promotes peptidyl transferase center (PTC) maturation. The polypeptide is Dual-action ribosomal maturation protein DarP (Citrobacter koseri (strain ATCC BAA-895 / CDC 4225-83 / SGSC4696)).